The following is a 379-amino-acid chain: Cell cycle checkpoint control protein RAD9A (379 aa).

The residue at position 17 (Tyr17) is a Phosphotyrosine. Residues 40-80 (FLFAPLFFQQYQAATPGQDLLRCKILMKSFLSVFRSLAMLE) form a possesses 3'-5' exonuclease activity region. Residues 255-379 (SDTDSHSQDL…VLAEDSEGEG (125 aa)) are sufficient for interaction with ABL1. Positions 257 to 271 (TDSHSQDLGSPERHQ) are enriched in basic and acidic residues. 2 disordered regions span residues 257 to 289 (TDSH…DFAN) and 308 to 379 (SRVL…EGEG). Ser261, Ser266, Ser317, Ser330, Ser363, Ser368, and Ser375 each carry phosphoserine.

The protein belongs to the rad9 family. Component of the toroidal 9-1-1 (RAD9-RAD1-HUS1) complex, composed of RAD9A, RAD1 and HUS1. The 9-1-1 complex associates with LIG1, POLB, FEN1, RAD17, HDAC1, RPA1 and RPA2. The 9-1-1 complex associates with the RAD17-RFC complex. RAD9A interacts with BCL2L1, FEN1, RAD9B, ABL1, RPA1, ATAD5 and RPA2. Interacts with DNAJC7. Interacts (when phosphorylated) with TOPBP1. Constitutively phosphorylated on serine and threonine amino acids in absence of DNA damage. Hyperphosphorylated by PRKCD and ABL1 upon DNA damage. Its phosphorylation by PRKCD may be required for the formation of the 9-1-1 complex. Phosphorylated at Ser-330 and Ser-375 by CK2, promoting interaction with TOPBP1.

Its subcellular location is the nucleus. The catalysed reaction is Exonucleolytic cleavage in the 3'- to 5'-direction to yield nucleoside 5'-phosphates.. Functionally, component of the 9-1-1 cell-cycle checkpoint response complex that plays a major role in DNA repair. The 9-1-1 complex is recruited to DNA lesion upon damage by the RAD17-replication factor C (RFC) clamp loader complex. Acts then as a sliding clamp platform on DNA for several proteins involved in long-patch base excision repair (LP-BER). The 9-1-1 complex stimulates DNA polymerase beta (POLB) activity by increasing its affinity for the 3'-OH end of the primer-template and stabilizes POLB to those sites where LP-BER proceeds; endonuclease FEN1 cleavage activity on substrates with double, nick, or gap flaps of distinct sequences and lengths; and DNA ligase I (LIG1) on long-patch base excision repair substrates. The 9-1-1 complex is necessary for the recruitment of RHNO1 to sites of double-stranded breaks (DSB) occurring during the S phase. RAD9A possesses 3'-&gt;5' double stranded DNA exonuclease activity. This Macaca fascicularis (Crab-eating macaque) protein is Cell cycle checkpoint control protein RAD9A (RAD9A).